A 206-amino-acid chain; its full sequence is Large ribosomal subunit protein uL4 (206 aa).

Residues 45–76 (RQGTQSAKTRTEVSGGGIKPWRQKGTGRARQG) form a disordered region.

The protein belongs to the universal ribosomal protein uL4 family. In terms of assembly, part of the 50S ribosomal subunit.

In terms of biological role, one of the primary rRNA binding proteins, this protein initially binds near the 5'-end of the 23S rRNA. It is important during the early stages of 50S assembly. It makes multiple contacts with different domains of the 23S rRNA in the assembled 50S subunit and ribosome. Forms part of the polypeptide exit tunnel. This Clostridium acetobutylicum (strain ATCC 824 / DSM 792 / JCM 1419 / IAM 19013 / LMG 5710 / NBRC 13948 / NRRL B-527 / VKM B-1787 / 2291 / W) protein is Large ribosomal subunit protein uL4.